The sequence spans 308 residues: S-adenosylmethionine-dependent nucleotide dehydratase (308 aa).

The region spanning 7–253 (SIQELVINFH…WQSYLMINPE (247 aa)) is the Radical SAM core domain. Residues cysteine 21, cysteine 25, and cysteine 28 each contribute to the [4Fe-4S] cluster site.

Belongs to the radical SAM superfamily. Viperin family. The cofactor is [4Fe-4S] cluster.

It catalyses the reaction CTP + AH2 + S-adenosyl-L-methionine = 3'-deoxy-3',4'-didehydro-CTP + 5'-deoxyadenosine + L-methionine + A + H2O + H(+). The enzyme catalyses GTP + AH2 + S-adenosyl-L-methionine = 3'-deoxy-3',4'-didehydro-GTP + 5'-deoxyadenosine + L-methionine + A + H2O + H(+). It carries out the reaction UTP + AH2 + S-adenosyl-L-methionine = 3'-deoxy-3',4'-didehydro-UTP + 5'-deoxyadenosine + L-methionine + A + H2O + H(+). Its function is as follows. Expression of pVip58 in E.coli (strain MG1655) confers resistance to phages lambda, P1 and T7; delays culture collapse upon infection with T7. Catalyzes the conversion of cytidine triphosphate (CTP) to 3'-deoxy-3',4'-didehydro-CTP (ddhCTP), guanosine triphosphate (GTP) to 3'-deoxy-3',4'-didehydro-GTP (ddhGTP) and uridine triphosphate (UTP) to 3'-deoxy-3',4'-didehydro-UTP (ddhUTP), probably via a SAM-dependent radical mechanism. The modified nucleotide represses transcription from T7 RNA polymerase-directed genes (possibly by acting as chain terminators), strongly suggesting these nucleotides block viral polymerase transcription. This is S-adenosylmethionine-dependent nucleotide dehydratase from Pseudoalteromonas ulvae.